Reading from the N-terminus, the 711-residue chain is Constitutive ornithine decarboxylase (711 aa).

K347 bears the N6-(pyridoxal phosphate)lysine mark.

This sequence belongs to the Orn/Lys/Arg decarboxylase class-I family. Requires pyridoxal 5'-phosphate as cofactor.

The catalysed reaction is L-ornithine + H(+) = putrescine + CO2. The protein operates within amine and polyamine biosynthesis; putrescine biosynthesis via L-ornithine pathway; putrescine from L-ornithine: step 1/1. The sequence is that of Constitutive ornithine decarboxylase (speC) from Escherichia coli (strain K12).